Here is a 384-residue protein sequence, read N- to C-terminus: Putative F-box/kelch-repeat protein At3g27910 (384 aa).

The F-box domain occupies 27 to 79 (SPTSLPLPDEIIVNCFAYIPRCDYPSLSLVSKTFNRLITSIELNIVRSLFQRT). 4 Kelch repeats span residues 138-184 (KIYV…IVDG), 185-235 (KIYV…VMNK), 237-274 (IYIM…VIDN), and 275-323 (MLYT…MANH).

The polypeptide is Putative F-box/kelch-repeat protein At3g27910 (Arabidopsis thaliana (Mouse-ear cress)).